The following is a 471-amino-acid chain: Eukaryotic translation initiation factor 3 subunit M (471 aa).

Residues 39–61 (EISSLLEPLRQQEQSEEEPDRKQ) are disordered. A PCI domain is found at 206 to 377 (DFELAQSHVV…SEFLVHRATY (172 aa)). The tract at residues 419–471 (QAATEEANQGKSGEKGGKGGDRRRNPQHQQQQQQSQPSQPQQPRETELVAGAE) is disordered. Basic and acidic residues predominate over residues 430–442 (SGEKGGKGGDRRR). Over residues 445–461 (QHQQQQQQSQPSQPQQP) the composition is skewed to low complexity.

The protein belongs to the eIF-3 subunit M family. Component of the eukaryotic translation initiation factor 3 (eIF-3) complex.

The protein resides in the cytoplasm. Component of the eukaryotic translation initiation factor 3 (eIF-3) complex, which is involved in protein synthesis of a specialized repertoire of mRNAs and, together with other initiation factors, stimulates binding of mRNA and methionyl-tRNAi to the 40S ribosome. The eIF-3 complex specifically targets and initiates translation of a subset of mRNAs involved in cell proliferation. The chain is Eukaryotic translation initiation factor 3 subunit M from Aspergillus clavatus (strain ATCC 1007 / CBS 513.65 / DSM 816 / NCTC 3887 / NRRL 1 / QM 1276 / 107).